The sequence spans 349 residues: Biotin synthase (349 aa).

The Radical SAM core domain maps to 70 to 295 (PEVEVEGIIS…RTMLRFAGGR (226 aa)). Residues cysteine 85, cysteine 89, and cysteine 92 each coordinate [4Fe-4S] cluster. Residues cysteine 128, cysteine 161, cysteine 220, and arginine 290 each contribute to the [2Fe-2S] cluster site.

The protein belongs to the radical SAM superfamily. Biotin synthase family. In terms of assembly, homodimer. [4Fe-4S] cluster is required as a cofactor. It depends on [2Fe-2S] cluster as a cofactor.

It catalyses the reaction (4R,5S)-dethiobiotin + (sulfur carrier)-SH + 2 reduced [2Fe-2S]-[ferredoxin] + 2 S-adenosyl-L-methionine = (sulfur carrier)-H + biotin + 2 5'-deoxyadenosine + 2 L-methionine + 2 oxidized [2Fe-2S]-[ferredoxin]. The protein operates within cofactor biosynthesis; biotin biosynthesis; biotin from 7,8-diaminononanoate: step 2/2. In terms of biological role, catalyzes the conversion of dethiobiotin (DTB) to biotin by the insertion of a sulfur atom into dethiobiotin via a radical-based mechanism. The polypeptide is Biotin synthase (Mycobacterium bovis (strain ATCC BAA-935 / AF2122/97)).